A 121-amino-acid polypeptide reads, in one-letter code: RxLR effector protein PexRD2 (121 aa).

A signal peptide spans 1–18 (MRLSYVFVVFAASLLVTA). A RxLR-dEER motif is present at residues 38 to 56 (RLLRKHYTAAENDGDSEAR). Positions 57–121 (ALNPEKMKTM…LNYVAEHTAV (65 aa)) are WY domain.

It belongs to the RxLR effector family.

The protein localises to the secreted. It is found in the host cytoplasm. The protein resides in the host nucleus. In terms of biological role, secreted effector involved in P.mirabilis colonization of host plants. May perturb the signaling of cell death associated with plant immunity, via interaction with a host MAP kinase. This Phytophthora mirabilis protein is RxLR effector protein PexRD2.